The following is a 160-amino-acid chain: MSYNCCSRNFSSRSFGGYLYYPGSCPSSLVYSTALCSPSTCQLGSSLYRDCQKTCWEPASCQKSCYHPRTSMLCCPCQTTCSGSLGFGSSSCRSQGYGSRSCYSLGNGSSGFRFLKYGGCGFPSLSYGSRFCYPNYLASGAWQSSCYRPICGSRFYQFTC.

Repeat copies occupy residues 41-50 (CQLGSSLYRD), 51-60 (CQKTCWEPAS), 61-70 (CQKSCYHPRT), and 77-86 (CQTTCSGSLG). Positions 41–86 (CQLGSSLYRDCQKTCWEPASCQKSCYHPRTSMLCCPCQTTCSGSLG) are 4 X 10 AA approximate repeats.

Belongs to the PMG family. Interacts with hair keratins.

Functionally, in the hair cortex, hair keratin intermediate filaments are embedded in an interfilamentous matrix, consisting of hair keratin-associated proteins (KRTAP), which are essential for the formation of a rigid and resistant hair shaft through their extensive disulfide bond cross-linking with abundant cysteine residues of hair keratins. The matrix proteins include the high-sulfur and high-glycine-tyrosine keratins. The polypeptide is Keratin-associated protein 13-4 (KRTAP13-4) (Hylobates agilis (Agile gibbon)).